The primary structure comprises 442 residues: Syndecan-3 (442 aa).

Disordered stretches follow at residues 1-24 (MKPG…AAAG) and 57-87 (RPVD…SGYF). The Extracellular portion of the chain corresponds to 1–387 (MKPGPPHRAG…SILERKEVLV (387 aa)). Positions 13–24 (HGAGAGAGAAAG) are enriched in gly residues. Positions 63–77 (GSGDDDSFPDDELDD) are enriched in acidic residues. Residues serine 80, serine 82, serine 84, and serine 91 are each glycosylated (O-linked (Xyl...) (glycosaminoglycan) serine). Residue serine 108 is glycosylated (O-linked (GalNAc) serine; by GALNT13). Residues threonine 109 and threonine 110 are each glycosylated (O-linked (GalNAc) threonine; by GALNT13). Disordered regions lie at residues 150-173 (EEPS…STGD), 225-326 (TTPE…ETTQ), and 340-367 (AAKA…AIDS). 3 stretches are compositionally biased toward low complexity: residues 156-173 (ATTV…STGD), 225-238 (TTPE…TAAV), and 275-286 (TLPLGTTAPGPT). Serine 160 carries O-linked (GalNAc) serine; by GALNT13 glycosylation. O-linked (GalNAc) threonine; by GALNT13 glycosylation is found at threonine 161, threonine 162, and threonine 169. A glycan (O-linked (GalNAc) serine; by GALNT13) is linked at serine 170. O-linked (GalNAc) threonine; by GALNT13 glycosylation is present at threonine 171. Over residues 288–299 (VAQTPTPETFLT) the composition is skewed to polar residues. O-linked (Xyl...) (glycosaminoglycan) serine glycosylation is found at serine 314 and serine 367. The helical transmembrane segment at 388–408 (AVIVGGVVGALFAAFLVTLLI) threads the bilayer. Tyrosine 409, tyrosine 419, tyrosine 431, and tyrosine 441 each carry phosphotyrosine. Residues 409–442 (YRMKKKDEGSYTLEEPKQASVTYQKPDKQEEFYA) are Cytoplasmic-facing. The disordered stretch occupies residues 419 to 442 (YTLEEPKQASVTYQKPDKQEEFYA). Over residues 433 to 442 (KPDKQEEFYA) the composition is skewed to basic and acidic residues.

This sequence belongs to the syndecan proteoglycan family. In terms of assembly, interacts with TIAM1. Interacts with PTN (via heparan sulfate chains); this interaction mediates the neurite outgrowth-promoting signal from PTN to the cytoskeleton of growing neurites; this interaction mediates osteoblast recruitment. Interacts with MDK; this interaction induces SDC3 clustering; this interaction induces neuronal cell adhesion and neurite outgrowth. Post-translationally, O-glycosylated within the Thr/Ser-rich region which could interact with lectin domains on other molecules. In terms of tissue distribution, expressed in the nervous system, the adrenal gland, and the spleen.

The protein resides in the cell membrane. Its function is as follows. Cell surface proteoglycan that may bear heparan sulfate. May have a role in the organization of cell shape by affecting the actin cytoskeleton, possibly by transferring signals from the cell surface in a sugar-dependent mechanism. The polypeptide is Syndecan-3 (SDC3) (Homo sapiens (Human)).